The chain runs to 555 residues: Oxygen-dependent choline dehydrogenase (555 aa).

An FAD-binding site is contributed by 4-33; the sequence is DYIIIGAGSAGNVLATRLTEDADVSVLLLE. The disordered stretch occupies residues 180–202; the sequence is QQEGFGPMDRTVTPKGRRASTAR. His473 serves as the catalytic Proton acceptor.

It belongs to the GMC oxidoreductase family. FAD serves as cofactor.

The catalysed reaction is choline + A = betaine aldehyde + AH2. It carries out the reaction betaine aldehyde + NAD(+) + H2O = glycine betaine + NADH + 2 H(+). It functions in the pathway amine and polyamine biosynthesis; betaine biosynthesis via choline pathway; betaine aldehyde from choline (cytochrome c reductase route): step 1/1. Its function is as follows. Involved in the biosynthesis of the osmoprotectant glycine betaine. Catalyzes the oxidation of choline to betaine aldehyde and betaine aldehyde to glycine betaine at the same rate. The polypeptide is Oxygen-dependent choline dehydrogenase (Serratia proteamaculans (strain 568)).